The sequence spans 222 residues: Pyridoxine/pyridoxamine 5'-phosphate oxidase (222 aa).

Residues 69–74, 84–85, K91, and Q113 contribute to the FMN site; these read RMVLLK and YT. K74 serves as a coordination point for substrate. The substrate site is built by Y131, R135, and S139. FMN is bound by residues 148–149 and W193; that span reads QS. Substrate is bound at residue 199-201; sequence RLH. An FMN-binding site is contributed by R203.

Belongs to the pyridoxamine 5'-phosphate oxidase family. In terms of assembly, homodimer. FMN is required as a cofactor.

The catalysed reaction is pyridoxamine 5'-phosphate + O2 + H2O = pyridoxal 5'-phosphate + H2O2 + NH4(+). It carries out the reaction pyridoxine 5'-phosphate + O2 = pyridoxal 5'-phosphate + H2O2. The protein operates within cofactor metabolism; pyridoxal 5'-phosphate salvage; pyridoxal 5'-phosphate from pyridoxamine 5'-phosphate: step 1/1. It functions in the pathway cofactor metabolism; pyridoxal 5'-phosphate salvage; pyridoxal 5'-phosphate from pyridoxine 5'-phosphate: step 1/1. Catalyzes the oxidation of either pyridoxine 5'-phosphate (PNP) or pyridoxamine 5'-phosphate (PMP) into pyridoxal 5'-phosphate (PLP). This chain is Pyridoxine/pyridoxamine 5'-phosphate oxidase, found in Maricaulis maris (strain MCS10) (Caulobacter maris).